A 239-amino-acid polypeptide reads, in one-letter code: MRPSGRKIDQMRKVSFERNFSKHAEGSCLVKFGDTHVLCTASLEEKTPPWLRNTGKGWVTAEYGMLPRATGERMKREAAAGKQGGRTQEIQRLIGRSLRAVVDLQALGERQITLDCDVIQADGGTRTASITGGWIALYDCLKWMESRNMIKVDRVLKDHVAAISCGIFASQPVIDLDYLEDSSAETDANFVMTGTGGIVEIQGTAEGTPFSEGEFTSLMQLARNGIGELVALQKQAVEG.

Phosphate-binding positions include arginine 86 and 124–126 (GTR).

It belongs to the RNase PH family. Homohexameric ring arranged as a trimer of dimers.

The enzyme catalyses tRNA(n+1) + phosphate = tRNA(n) + a ribonucleoside 5'-diphosphate. In terms of biological role, phosphorolytic 3'-5' exoribonuclease that plays an important role in tRNA 3'-end maturation. Removes nucleotide residues following the 3'-CCA terminus of tRNAs; can also add nucleotides to the ends of RNA molecules by using nucleoside diphosphates as substrates, but this may not be physiologically important. Probably plays a role in initiation of 16S rRNA degradation (leading to ribosome degradation) during starvation. The sequence is that of Ribonuclease PH from Rhizobium johnstonii (strain DSM 114642 / LMG 32736 / 3841) (Rhizobium leguminosarum bv. viciae).